Reading from the N-terminus, the 247-residue chain is MAPQMGYDRAITVFSPDGRLFQVEYAREAVKRGTTAVGIKAADGVVLLVDKRITSRLVEAESIEKIFQIDEHIGAATSGLVADARSLVDRARVEAQVNRVSYDEPIGVEVISKKICDHKQTYTQYGGVRPYGTALLIAGVDDNKPRLFETDPSGALLEYKATAIGAGRNAVVEVFEADYREDMNMDAAILLGMDALYKAAEGKFDAGTLEVGVVSLEDKKFRKLGPEEVENYVQQILEKHKGTESSE.

It belongs to the peptidase T1A family. In terms of assembly, the 20S proteasome core is composed of 14 alpha and 14 beta subunits that assemble into four stacked heptameric rings, resulting in a barrel-shaped structure. The two inner rings, each composed of seven catalytic beta subunits, are sandwiched by two outer rings, each composed of seven alpha subunits. The catalytic chamber with the active sites is on the inside of the barrel. Has a gated structure, the ends of the cylinder being occluded by the N-termini of the alpha-subunits. Is capped at one or both ends by the proteasome regulatory ATPase, PAN.

It is found in the cytoplasm. With respect to regulation, the formation of the proteasomal ATPase PAN-20S proteasome complex, via the docking of the C-termini of PAN into the intersubunit pockets in the alpha-rings, triggers opening of the gate for substrate entry. Interconversion between the open-gate and close-gate conformations leads to a dynamic regulation of the 20S proteasome proteolysis activity. Its function is as follows. Component of the proteasome core, a large protease complex with broad specificity involved in protein degradation. The sequence is that of Proteasome subunit alpha from Methanosarcina acetivorans (strain ATCC 35395 / DSM 2834 / JCM 12185 / C2A).